Consider the following 535-residue polypeptide: CTP synthase (535 aa).

The segment at 1 to 267 (MTKYIFVTGG…DQIVCDHLKL (267 aa)) is amidoligase domain. S13 is a binding site for CTP. S13 is a binding site for UTP. 14-19 (SLGKGI) provides a ligand contact to ATP. An L-glutamine-binding site is contributed by Y54. Position 71 (D71) interacts with ATP. Mg(2+) contacts are provided by D71 and E141. CTP-binding positions include 148–150 (DIE), 188–193 (KTKPTQ), and K224. Residues 188–193 (KTKPTQ) and K224 contribute to the UTP site. Residue 240 to 242 (RDA) coordinates ATP. The Glutamine amidotransferase type-1 domain occupies 292–534 (KIALVGKYVE…VKASITNKES (243 aa)). L-glutamine is bound at residue G354. C381 functions as the Nucleophile; for glutamine hydrolysis in the catalytic mechanism. L-glutamine is bound by residues 382-385 (LGMQ), E405, and R462. Residues H507 and E509 contribute to the active site.

It belongs to the CTP synthase family. In terms of assembly, homotetramer.

The catalysed reaction is UTP + L-glutamine + ATP + H2O = CTP + L-glutamate + ADP + phosphate + 2 H(+). It carries out the reaction L-glutamine + H2O = L-glutamate + NH4(+). The enzyme catalyses UTP + NH4(+) + ATP = CTP + ADP + phosphate + 2 H(+). It participates in pyrimidine metabolism; CTP biosynthesis via de novo pathway; CTP from UDP: step 2/2. Its activity is regulated as follows. Allosterically activated by GTP, when glutamine is the substrate; GTP has no effect on the reaction when ammonia is the substrate. The allosteric effector GTP functions by stabilizing the protein conformation that binds the tetrahedral intermediate(s) formed during glutamine hydrolysis. Inhibited by the product CTP, via allosteric rather than competitive inhibition. Functionally, catalyzes the ATP-dependent amination of UTP to CTP with either L-glutamine or ammonia as the source of nitrogen. Regulates intracellular CTP levels through interactions with the four ribonucleotide triphosphates. The chain is CTP synthase from Bacillus thuringiensis subsp. konkukian (strain 97-27).